Reading from the N-terminus, the 175-residue chain is Protein UPS1, mitochondrial (175 aa).

The required for mitochondrial targeting stretch occupies residues 1–80 (MVLLHKSTHI…RGITETWIIE (80 aa)). The PRELI/MSF1 domain occupies 2–172 (VLLHKSTHIF…VIQKLEEARN (171 aa)). 4 residues coordinate a 1,2-diacyl-sn-glycero-3-phosphate: Tyr26, Lys58, Lys148, and Asn152.

It belongs to the slowmo family. As to quaternary structure, interacts with MDM35. Found associated with a 170 kDa complex.

The protein localises to the mitochondrion inner membrane. The protein resides in the mitochondrion intermembrane space. Functionally, required for maintenance of normal mitochondrial morphology. Required for PCP1-dependent processing of MGM1. The UPS1:MDM35 complex mediates the transfer of phosphatidic acid (PA) between liposomes and probably functions as a PA transporter across the mitochondrion intermembrane space. Phosphatidic acid release requires dissociation of the UPS1:MDM35 complex. Phosphatidic acid import is required for cardiolipin (CL) synthesis in the mitochondrial inner membrane. With UPS2, controls the level of cardiolipin in mitochondria. Cardiolipin is a unique phospholipid with four fatty acid chains and is present mainly in the mitochondrial inner membrane where it stabilizes the electron transport chain supercomplex between complexes III and IV through direct interaction of their subunits. In Saccharomyces cerevisiae (strain ATCC 204508 / S288c) (Baker's yeast), this protein is Protein UPS1, mitochondrial (UPS1).